Reading from the N-terminus, the 557-residue chain is CTP synthase (557 aa).

An amidoligase domain region spans residues 1-267 (MAKYIFVTGG…GAYLTQRLGL (267 aa)). Serine 13 is a CTP binding site. Serine 13 is a UTP binding site. 14–19 (SVGKGI) serves as a coordination point for ATP. An L-glutamine-binding site is contributed by tyrosine 54. Aspartate 71 serves as a coordination point for ATP. Residues aspartate 71 and glutamate 141 each coordinate Mg(2+). Residues 148–150 (DIE), 188–193 (KTKPTQ), and lysine 224 each bind CTP. UTP contacts are provided by residues 188–193 (KTKPTQ) and lysine 224. Positions 292–535 (AIALVGKYVE…VAAAAKTFRE (244 aa)) constitute a Glutamine amidotransferase type-1 domain. Position 354 (glycine 354) interacts with L-glutamine. Cysteine 381 serves as the catalytic Nucleophile; for glutamine hydrolysis. Residues 382-385 (LGMQ), glutamate 406, and arginine 463 contribute to the L-glutamine site. Catalysis depends on residues histidine 508 and glutamate 510. A disordered region spans residues 536-557 (GDQRPLPLEQNGAVTEHEPHSR).

It belongs to the CTP synthase family. As to quaternary structure, homotetramer.

The catalysed reaction is UTP + L-glutamine + ATP + H2O = CTP + L-glutamate + ADP + phosphate + 2 H(+). It catalyses the reaction L-glutamine + H2O = L-glutamate + NH4(+). It carries out the reaction UTP + NH4(+) + ATP = CTP + ADP + phosphate + 2 H(+). Its pathway is pyrimidine metabolism; CTP biosynthesis via de novo pathway; CTP from UDP: step 2/2. Its activity is regulated as follows. Allosterically activated by GTP, when glutamine is the substrate; GTP has no effect on the reaction when ammonia is the substrate. The allosteric effector GTP functions by stabilizing the protein conformation that binds the tetrahedral intermediate(s) formed during glutamine hydrolysis. Inhibited by the product CTP, via allosteric rather than competitive inhibition. In terms of biological role, catalyzes the ATP-dependent amination of UTP to CTP with either L-glutamine or ammonia as the source of nitrogen. Regulates intracellular CTP levels through interactions with the four ribonucleotide triphosphates. This is CTP synthase from Roseiflexus sp. (strain RS-1).